The primary structure comprises 362 residues: Probable dual-specificity RNA methyltransferase RlmN (362 aa).

The Proton acceptor role is filled by Glu-99. In terms of domain architecture, Radical SAM core spans 105–341; sequence SPDRHTVCVS…VTVRKSQGAS (237 aa). Cys-112 and Cys-346 are joined by a disulfide. Residues Cys-119, Cys-123, and Cys-126 each coordinate [4Fe-4S] cluster. S-adenosyl-L-methionine contacts are provided by residues 171–172, Ser-204, 227–229, and Asn-303; these read GE and SLH. Catalysis depends on Cys-346, which acts as the S-methylcysteine intermediate.

It belongs to the radical SAM superfamily. RlmN family. It depends on [4Fe-4S] cluster as a cofactor.

It is found in the cytoplasm. It catalyses the reaction adenosine(2503) in 23S rRNA + 2 reduced [2Fe-2S]-[ferredoxin] + 2 S-adenosyl-L-methionine = 2-methyladenosine(2503) in 23S rRNA + 5'-deoxyadenosine + L-methionine + 2 oxidized [2Fe-2S]-[ferredoxin] + S-adenosyl-L-homocysteine. It carries out the reaction adenosine(37) in tRNA + 2 reduced [2Fe-2S]-[ferredoxin] + 2 S-adenosyl-L-methionine = 2-methyladenosine(37) in tRNA + 5'-deoxyadenosine + L-methionine + 2 oxidized [2Fe-2S]-[ferredoxin] + S-adenosyl-L-homocysteine. In terms of biological role, specifically methylates position 2 of adenine 2503 in 23S rRNA and position 2 of adenine 37 in tRNAs. The protein is Probable dual-specificity RNA methyltransferase RlmN of Chlorobium phaeobacteroides (strain BS1).